The following is a 238-amino-acid chain: Histone deacetylase 7 (238 aa).

Disordered regions lie at residues 1–26 and 47–72; these read TPGSQPQPMDLRVGQRPTVEPPPEPA and QQQRSAEPMRLSMDPPLPELQGGQQE. The interval 58–158 is interaction with MEF2A; that stretch reads SMDPPLPELQ…LPTEPPEHFP (101 aa). Phosphoserine occurs at positions 118 and 164. The disordered stretch occupies residues 145–238; that stretch reads PVPSLPTEPP…NPALGSEADG (94 aa). Residues 176–190 show a composition bias toward basic and acidic residues; that stretch reads KSLERRKNPLLRKES. Position 190 is a phosphoserine; by PKD/PRKD2 (serine 190). Low complexity predominate over residues 206–221; the sequence is SSPSSSSTPASGCSSP.

It belongs to the histone deacetylase family. HD type 2 subfamily. As to quaternary structure, interacts with HDAC1, HDAC2, HDAC3, HDAC4, HDAC5, NCOR1, NCOR2, SIN3A, SIN3B, RBBP4, RBBP7, MTA1L1, SAP30 and MBD3. Interacts with KAT5 and EDNRA. Interacts with the 14-3-3 protein YWHAE, MEF2A, MEF2B and MEF2C. Interacts with ZMYND15. Interacts with KDM5B. Interacts with PML. Interacts with FOXP3. Interacts with RARA. Post-translationally, may be phosphorylated by CaMK1. Phosphorylated by the PKC kinases PKN1 and PKN2, impairing nuclear import. Phosphorylation at Ser-164 by MARK2, MARK3 and PRKD1 promotes interaction with 14-3-3 proteins and export from the nucleus. Phosphorylation at Ser-164 is a prerequisite for phosphorylation at Ser-190.

It localises to the nucleus. It is found in the cytoplasm. The catalysed reaction is N(6)-acetyl-L-lysyl-[histone] + H2O = L-lysyl-[histone] + acetate. It carries out the reaction N(6)-acetyl-L-lysyl-[protein] + H2O = L-lysyl-[protein] + acetate. Functionally, responsible for the deacetylation of lysine residues on the N-terminal part of the core histones (H2A, H2B, H3 and H4). Histone deacetylation gives a tag for epigenetic repression and plays an important role in transcriptional regulation, cell cycle progression and developmental events. Histone deacetylases act via the formation of large multiprotein complexes. Involved in muscle maturation by repressing transcription of myocyte enhancer factors such as MEF2A, MEF2B and MEF2C. During muscle differentiation, it shuttles into the cytoplasm, allowing the expression of myocyte enhancer factors. May be involved in Epstein-Barr virus (EBV) latency, possibly by repressing the viral BZLF1 gene. Positively regulates the transcriptional repressor activity of FOXP3. Serves as a corepressor of RARA, causing its deacetylation and inhibition of RARE DNA element binding. In association with RARA, plays a role in the repression of microRNA-10a and thereby in the inflammatory response. Also acetylates non-histone proteins, such as ALKBH5. The sequence is that of Histone deacetylase 7 (Hdac7) from Rattus norvegicus (Rat).